Reading from the N-terminus, the 579-residue chain is MVLSEVWTALSGLSGVCLACSLLSAAVVLRWTRSQTARGAVTRARQKQRAGLETMDKAVQRFRLQNPDLDSEALLALPLLQLVQKLQSGELSPEAVLFTYLGKAWEVNKGTNCVTSYLTDCETQLSQAPRQGLLYGVPVSLKECFSYKGHASTLGLSLNEGVTSESDCVVVQVLKLQGAVPFVHTNVPQSMLSYDCSNPLFGQTMNPWKPSKSPGGSSGGEGALIGSGGSPLGLGTDIGGSIRFPSAFCGICGLKPTGNRLSKSGLKSCVYGQTAVQLSVGPMARDVDSLALCMKALLCEDLFRLDSTIPPLPFREEIYRSSRPLRVGYYETDNYTMPTPAMRRAVMETKQSLEAAGHTLVPFLPNNIPYALEVLSAGGLFSDGGCSFLQNFKGDFVDPCLGDLVLVLKLPRWFKKLLSFLLKPLFPRLAAFLNSMCPRSAEKLWELQHEIEMYRQSVIAQWKAMNLDVVLTPMLGPALDLNTPGRATGAISYTVLYNCLDFPAGVVPVTTVTAEDDAQMEHYKGYFGDMWDNILKKGMKKGIGLPVAVQCVALPWQEELCLRFMREVERLMTPEKRPS.

Residues 9 to 29 (ALSGLSGVCLACSLLSAAVVL) traverse the membrane as a helical segment. Residues 30–403 (RWTRSQTARG…GDFVDPCLGD (374 aa)) are Cytoplasmic-facing. Catalysis depends on Lys142, which acts as the Charge relay system. Substrate contacts are provided by residues Met191, Ser217, and 238 to 241 (IGGS). Residue Ser217 is the Charge relay system of the active site. Ser241 functions as the Acyl-ester intermediate in the catalytic mechanism. The residue at position 241 (Ser241) is a Phosphoserine. Residues 404 to 433 (LVLVLKLPRWFKKLLSFLLKPLFPRLAAFL) lie within the membrane without spanning it. At 434-579 (NSMCPRSAEK…RLMTPEKRPS (146 aa)) the chain is on the cytoplasmic side.

The protein belongs to the amidase family. Homodimer.

Its subcellular location is the endoplasmic reticulum membrane. It localises to the golgi apparatus membrane. The enzyme catalyses N-(5Z,8Z,11Z,14Z-eicosatetraenoyl)-ethanolamine + H2O = ethanolamine + (5Z,8Z,11Z,14Z)-eicosatetraenoate. It catalyses the reaction (9Z)-octadecenamide + H2O = (9Z)-octadecenoate + NH4(+). The catalysed reaction is 2-(5Z,8Z,11Z,14Z-eicosatetraenoyl)-glycerol + H2O = glycerol + (5Z,8Z,11Z,14Z)-eicosatetraenoate + H(+). It carries out the reaction N-(9Z-hexadecenoyl) ethanolamine + H2O = (9Z)-hexadecenoate + ethanolamine. The enzyme catalyses N-(9Z-octadecenoyl) ethanolamine + H2O = ethanolamine + (9Z)-octadecenoate. It catalyses the reaction N-octadecanoyl ethanolamine + H2O = octadecanoate + ethanolamine. The catalysed reaction is N-docosanoyl-ethanolamine + H2O = docosanoate + ethanolamine. It carries out the reaction N-tetracosanoyl-taurine + H2O = tetracosanoate + taurine. The enzyme catalyses N-(15Z-tetracosenoyl)-ethanolamine + H2O = (15Z)-tetracosenoate + ethanolamine. It catalyses the reaction N-(9Z-octadecenoyl)-taurine + H2O = taurine + (9Z)-octadecenoate. The catalysed reaction is N-docosanoyl-taurine + H2O = docosanoate + taurine. It carries out the reaction N-(15Z-tetracosenoyl)-taurine + H2O = (15Z)-tetracosenoate + taurine. The enzyme catalyses N-tricosanoyl-taurine + H2O = tricosanoate + taurine. It catalyses the reaction (9Z,12Z,15Z)-octadecatrienamide + H2O = (9Z,12Z,15Z)-octadecatrienoate + NH4(+). The catalysed reaction is (5Z,8Z,11Z,14Z)-eicosatetraenamide + H2O = (5Z,8Z,11Z,14Z)-eicosatetraenoate + NH4(+). It carries out the reaction (6Z)-octadecenamide + H2O = (6Z)-octadecenoate + NH4(+). The enzyme catalyses (15Z)-tetracosenamide + H2O = (15Z)-tetracosenoate + NH4(+). It catalyses the reaction (8Z,11Z,14Z)-eicosatrienamide + H2O = (8Z,11Z,14Z)-eicosatrienoate + NH4(+). The catalysed reaction is (11Z,14Z,17Z)-eicosatrienamide + H2O = (11Z,14Z,17Z)-eicosatrienoate + NH4(+). It carries out the reaction (11Z,14Z)-eicosadienamide + H2O = (11Z,14Z)-eicosadienoate + NH4(+). The enzyme catalyses (9Z,12Z)-octadecadienamide + H2O = (9Z,12Z)-octadecadienoate + NH4(+). It catalyses the reaction tetradecamide + H2O = tetradecanoate + NH4(+). The catalysed reaction is 1-O-methyl-(5Z,8Z,11Z,14Z)-eicosatetraenoate + H2O = methanol + (5Z,8Z,11Z,14Z)-eicosatetraenoate + H(+). It carries out the reaction (11Z)-eicosenamide + H2O = (11Z)-eicosenoate + NH4(+). The enzyme catalyses (9Z)-octadecenoate + glycine = N-(9Z-octadecenoyl)glycine + H2O. It catalyses the reaction N-(5Z,8Z,11Z,14Z)-eicosatetraenoyl-glycine + H2O = (5Z,8Z,11Z,14Z)-eicosatetraenoate + glycine. The catalysed reaction is N-(5Z,8Z,11Z,14Z-eicosatetraenoyl)-L-serine + H2O = (5Z,8Z,11Z,14Z)-eicosatetraenoate + L-serine. With respect to regulation, inhibited the trifluoromethyl compound PF-3845. Catalyzes the hydrolysis of endogenous amidated lipids like the endocannabinoid anandamide (N-(5Z,8Z,11Z,14Z-eicosatetraenoyl)-ethanolamine), as well as other fatty amides such as the taurine-conjugated fatty acids (a structural class of central nervous system (CNS) metabolites), to their corresponding fatty acids, thereby regulating the signaling functions of these molecules. FAAH cooperates with PM20D1 in the hydrolysis of amino acid-conjugated fatty acids such as N-fatty acyl glycine and N-fatty acyl-L-serine, thereby acting as a physiological regulator of specific subsets of intracellular, but not of extracellular, N-fatty acyl amino acids. It can also catalyze the hydrolysis of the endocannabinoid 2-arachidonoylglycerol (2-(5Z,8Z,11Z,14Z-eicosatetraenoyl)-glycerol). The chain is Fatty-acid amide hydrolase 1 (Faah) from Mus musculus (Mouse).